Here is a 338-residue protein sequence, read N- to C-terminus: Lipoate-protein ligase A (338 aa).

The region spanning 29–216 is the BPL/LPL catalytic domain; sequence SPDQRVLFLW…AFFNYYDEKV (188 aa). ATP-binding positions include arginine 71, 76–79, and lysine 134; that span reads GAVF. Lysine 134 lines the (R)-lipoate pocket.

It belongs to the LplA family. Monomer.

It localises to the cytoplasm. The enzyme catalyses L-lysyl-[lipoyl-carrier protein] + (R)-lipoate + ATP = N(6)-[(R)-lipoyl]-L-lysyl-[lipoyl-carrier protein] + AMP + diphosphate + H(+). It functions in the pathway protein modification; protein lipoylation via exogenous pathway; protein N(6)-(lipoyl)lysine from lipoate: step 1/2. Its pathway is protein modification; protein lipoylation via exogenous pathway; protein N(6)-(lipoyl)lysine from lipoate: step 2/2. Catalyzes both the ATP-dependent activation of exogenously supplied lipoate to lipoyl-AMP and the transfer of the activated lipoyl onto the lipoyl domains of lipoate-dependent enzymes. This is Lipoate-protein ligase A from Yersinia enterocolitica serotype O:8 / biotype 1B (strain NCTC 13174 / 8081).